A 308-amino-acid polypeptide reads, in one-letter code: Mitoferrin (308 aa).

Transmembrane regions (helical) follow at residues 13–29, 69–89, 111–131, 168–184, 213–233, and 285–302; these read GGSF…AGFA, ITGL…SHAV, IKVG…ASPM, YTTT…VYFA, LVAG…FDVV, and MVFH…YEYF. 3 Solcar repeats span residues 14 to 100, 108 to 192, and 207 to 305; these read GSFY…LKFK, HHPI…LKKI, and YQLI…FKFI.

It belongs to the mitochondrial carrier (TC 2.A.29) family.

It is found in the mitochondrion inner membrane. Functionally, mitochondrial solute carriers shuttle metabolites, nucleotides, and cofactors through the mitochondrial inner membrane. Mitochondrial iron transporter that mediates iron uptake. Probably required for heme synthesis of hemoproteins and Fe-S cluster assembly. This chain is Mitoferrin (mcfF), found in Dictyostelium discoideum (Social amoeba).